We begin with the raw amino-acid sequence, 137 residues long: Golgin subfamily A member 7 (137 aa).

2 S-palmitoyl cysteine lipidation sites follow: cysteine 69 and cysteine 72.

The protein belongs to the ERF4 family. In terms of assembly, interacts with GOLGA3. Interacts with ZDHHC9. Post-translationally, palmitoylated on Cys-69 and Cys-72; which is required for Golgi localization and interaction with GOLGA3.

The protein resides in the golgi apparatus membrane. In terms of biological role, may be involved in protein transport from Golgi to cell surface. The ZDHHC9-GOLGA7 complex is a palmitoyltransferase specific for HRAS and NRAS. The protein is Golgin subfamily A member 7 (GOLGA7) of Bos taurus (Bovine).